The sequence spans 266 residues: Lectin 7 (266 aa).

Residues 1-27 (MAINTSRTQILFITIISFLILAQNVNS) form the signal peptide. 3 N-linked (GlcNAc...) asparagine glycosylation sites follow: Asn121, Asn205, and Asn219.

It belongs to the leguminous lectin family.

Functionally, may be involved in arbuscular mycorrhizal (AM) symbiosis with AM fungi. The polypeptide is Lectin 7 (Medicago truncatula (Barrel medic)).